A 391-amino-acid chain; its full sequence is Pyruvate dehydrogenase E1 component subunit beta-3, chloroplastic (391 aa).

Residues 1–35 constitute a chloroplast transit peptide; sequence MATAAAASLQYALHGAASASAKPRSAAPGRSVRVV. Thiamine diphosphate is bound at residue Glu-127. Ile-180, Ala-228, Ile-229, and Asn-233 together coordinate K(+).

In terms of assembly, tetramer of 2 alpha and 2 beta subunits. It depends on thiamine diphosphate as a cofactor.

The protein localises to the plastid. It localises to the chloroplast. The catalysed reaction is N(6)-[(R)-lipoyl]-L-lysyl-[protein] + pyruvate + H(+) = N(6)-[(R)-S(8)-acetyldihydrolipoyl]-L-lysyl-[protein] + CO2. Functionally, the pyruvate dehydrogenase complex catalyzes the overall conversion of pyruvate to acetyl-CoA and CO(2). It contains multiple copies of three enzymatic components: pyruvate dehydrogenase (E1), dihydrolipoamide acetyltransferase (E2) and lipoamide dehydrogenase (E3). The polypeptide is Pyruvate dehydrogenase E1 component subunit beta-3, chloroplastic (Oryza sativa subsp. japonica (Rice)).